The sequence spans 254 residues: tRNA (guanine-N(7)-)-methyltransferase (254 aa).

Positions Met1 to Gly34 are disordered. 4 residues coordinate S-adenosyl-L-methionine: Glu87, Glu112, Asp139, and Asp162. Residue Asp162 is part of the active site. Substrate contacts are provided by residues Lys166, Asp198, and Thr233 to Glu236.

Belongs to the class I-like SAM-binding methyltransferase superfamily. TrmB family.

The catalysed reaction is guanosine(46) in tRNA + S-adenosyl-L-methionine = N(7)-methylguanosine(46) in tRNA + S-adenosyl-L-homocysteine. The protein operates within tRNA modification; N(7)-methylguanine-tRNA biosynthesis. Catalyzes the formation of N(7)-methylguanine at position 46 (m7G46) in tRNA. The protein is tRNA (guanine-N(7)-)-methyltransferase of Bordetella pertussis (strain Tohama I / ATCC BAA-589 / NCTC 13251).